A 473-amino-acid chain; its full sequence is 3-isopropylmalate dehydratase large subunit (473 aa).

The [4Fe-4S] cluster site is built by Cys-354, Cys-414, and Cys-417.

Belongs to the aconitase/IPM isomerase family. LeuC type 1 subfamily. Heterodimer of LeuC and LeuD. It depends on [4Fe-4S] cluster as a cofactor.

The catalysed reaction is (2R,3S)-3-isopropylmalate = (2S)-2-isopropylmalate. The protein operates within amino-acid biosynthesis; L-leucine biosynthesis; L-leucine from 3-methyl-2-oxobutanoate: step 2/4. Functionally, catalyzes the isomerization between 2-isopropylmalate and 3-isopropylmalate, via the formation of 2-isopropylmaleate. The protein is 3-isopropylmalate dehydratase large subunit of Rhodopseudomonas palustris (strain BisB18).